We begin with the raw amino-acid sequence, 160 residues long: Cytochrome b6-f complex subunit 4 (160 aa).

3 helical membrane passes run 36-56, 95-115, and 131-151; these read LLYI…GLAV, LLGV…PFLE, and TVFL…TLPI.

The protein belongs to the cytochrome b family. PetD subfamily. The 4 large subunits of the cytochrome b6-f complex are cytochrome b6, subunit IV (17 kDa polypeptide, petD), cytochrome f and the Rieske protein, while the 4 small subunits are petG, petL, petM and petN. The complex functions as a dimer.

The protein resides in the plastid. It localises to the chloroplast thylakoid membrane. Component of the cytochrome b6-f complex, which mediates electron transfer between photosystem II (PSII) and photosystem I (PSI), cyclic electron flow around PSI, and state transitions. This chain is Cytochrome b6-f complex subunit 4, found in Solanum bulbocastanum (Wild potato).